The chain runs to 184 residues: MDALTLLTTRKSNKKLTAPAPNAEQLERIFEAAMRAPDHGKLHPYHFIVMENESLNKLETLLKAAVVEFDLGEEKLMKAENLAHRAPMVIGVVAKIDPTIAKVPGWEQMLSAGCATYGLQLAAQAQGFDNVWISGKWVNGTALREAFGCREQDRVIALVMIGTGMEKAERECRVIDTKDFVTYL.

Residues 10–12 (RKS), arginine 35, and histidine 39 contribute to the FMN site. Residue 122–127 (AAQAQG) coordinates NAD(+). 132–134 (WIS) is an FMN binding site.

The protein belongs to the nitroreductase family. In terms of assembly, homodimer. FMN serves as cofactor.

This is Putative NAD(P)H nitroreductase HI_1542 from Haemophilus influenzae (strain ATCC 51907 / DSM 11121 / KW20 / Rd).